A 508-amino-acid polypeptide reads, in one-letter code: Enhancer of mRNA-decapping protein 3 (508 aa).

Positions 1-68 (MAADWLGSIV…ITELKILEIP (68 aa)) constitute a Sm domain. The interval 1–79 (MAADWLGSIV…PGGNQHFGDV (79 aa)) is required for P-body targeting and interaction with DCP1A. A disordered region spans residues 95 to 192 (ISQNGTGKLV…QMKNKDDECF (98 aa)). A phosphoserine mark is found at Ser-131, Ser-138, Ser-140, and Ser-161. A required for interaction with DDX6 region spans residues 191–296 (CFGDDIEEIP…HKKLLSVAEK (106 aa)). The DFDF domain maps to 192-228 (FGDDIEEIPDTDFDFEGNLALFDKAAVFEEIGTYERR). The 205-residue stretch at 283–487 (SYEQHKKLLS…DIGIPQQVFQ (205 aa)) folds into the YjeF N-terminal domain.

Belongs to the EDC3 family. Homodimer (via YjeF N-terminal domain). Forms a complex with DCP1A, DCP2, DDX6 and EDC4/HEDLS, within this complex directly interacts with DCP1A and DDX6. Interacts with ZFP36.

Its subcellular location is the cytoplasm. It is found in the P-body. Functionally, binds single-stranded RNA. Involved in the process of mRNA degradation and in the positive regulation of mRNA decapping. The polypeptide is Enhancer of mRNA-decapping protein 3 (EDC3) (Macaca fascicularis (Crab-eating macaque)).